The primary structure comprises 151 residues: Methylglyoxal synthase (151 aa).

The region spanning 1-151 (MKKTTRTMAA…DYQAYLAERT (151 aa)) is the MGS-like domain. Substrate is bound by residues His-19, Lys-23, 45–48 (TGTT), and 65–66 (SG). Asp-71 functions as the Proton donor/acceptor in the catalytic mechanism. A substrate-binding site is contributed by His-98.

Belongs to the methylglyoxal synthase family.

It carries out the reaction dihydroxyacetone phosphate = methylglyoxal + phosphate. In terms of biological role, catalyzes the formation of methylglyoxal from dihydroxyacetone phosphate. The polypeptide is Methylglyoxal synthase (Vibrio cholerae serotype O1 (strain ATCC 39541 / Classical Ogawa 395 / O395)).